The primary structure comprises 294 residues: 2,4-diacetylphloroglucinol hydrolase (294 aa).

4 residues coordinate Zn(2+): His-129, Glu-160, His-270, and Glu-274.

Belongs to the DAPG/phloretin hydrolase family. As to quaternary structure, homodimer. Zn(2+) serves as cofactor.

The catalysed reaction is 2,4-diacetylphloroglucinol + H2O = 2-acetylphloroglucinol + acetate. With respect to regulation, specifically and significantly activated by CoCl(2). Competitively inhibited by MAPG, but not by 2-hydroxy- and 4-hydroxyacetophenone. Hydrolase that specifically degrades the potent antimicrobial compound 2,4-diacetylphloroglucinol (DAPG) to equimolar amounts of mildly toxic monoacetylphloroglucinol (MAPG) and acetate. The polypeptide is 2,4-diacetylphloroglucinol hydrolase (Pseudomonas sp).